The chain runs to 178 residues: Caveolin-1 (178 aa).

Ser2 bears the N-acetylserine mark. Position 2 is a phosphoserine (Ser2). Residues 2–94 (SGGKYVDSEG…WKASFTTFTV (93 aa)) are required for homooligomerization. Topologically, residues 2–104 (SGGKYVDSEG…TKYWFYRLLS (103 aa)) are cytoplasmic. At Lys5 the chain carries N6-acetyllysine; alternate. Residue Lys5 forms a Glycyl lysine isopeptide (Lys-Gly) (interchain with G-Cter in ubiquitin); alternate linkage. Phosphotyrosine is present on Tyr6. A Phosphoserine modification is found at Ser9. A Phosphotyrosine; by ABL1 modification is found at Tyr14. The residue at position 25 (Tyr25) is a Phosphotyrosine. Glycyl lysine isopeptide (Lys-Gly) (interchain with G-Cter in ubiquitin) cross-links involve residues Lys26, Lys30, Lys39, Lys47, and Lys57. The interaction with CAVIN3 stretch occupies residues 82-94 (DGIWKASFTTFTV). The helical intramembrane region spans 105–125 (TLFGIPMALIWGIYFAILSFL). Residues 126–178 (HIWAVVPCIKSFLIEIQCIGRVYSIYIHTFCDPLFEAVGKLFSNIRINMQKEI) lie on the Cytoplasmic side of the membrane. The interval 131–142 (VPCIKSFLIEIQ) is interacts with SPRY1, SPRY2, SPRY3 and SPRY4. S-palmitoyl cysteine attachment occurs at residues Cys133, Cys143, and Cys156. The interval 149–160 (SIYIHTFCDPLF) is interacts with SPRY1, SPRY2, and SPRY4. An interacts with SPRY1, SPRY2, SPRY3 and SPRY4 region spans residues 167–178 (FSNIRINMQKEI).

Belongs to the caveolin family. As to quaternary structure, homooligomer. Interacts with GLIPR2. Interacts with NOSTRIN. Interacts with SNAP25 and STX1A. Interacts (via the N-terminus) with DPP4; the interaction is direct. Interacts with CTNNB1, CDH1 and JUP. Interacts with PACSIN2; this interaction induces membrane tubulation. Interacts with SLC7A9. Interacts with BMX and BTK. Interacts with TGFBR1. Interacts with CAVIN3 (via leucine-zipper domain) in a cholesterol-sensitive manner. Interacts with CAVIN1. Interacts with EHD2 in a cholesterol-dependent manner. Forms a ternary complex with UBXN6 and VCP; mediates CAV1 targeting to lysosomes for degradation. Interacts with ABCG1; this interaction regulates ABCG1-mediated cholesterol efflux. Interacts with NEU3; this interaction enhances NEU3 sialidase activity within caveola. Interacts (via C-terminus) with SPRY1, SPRY2 (via C-terminus), SPRY3, and SPRY4. Interacts with IGFBP5; this interaction allows trafficking of IGFBP5 from the plasma membrane to the nucleus. Phosphorylated at Tyr-14 by ABL1 in response to oxidative stress. In terms of processing, ubiquitinated. Undergo monoubiquitination and multi- and/or polyubiquitination. Monoubiquitination of N-terminal lysines promotes integration in a ternary complex with UBXN6 and VCP which promotes oligomeric CAV1 targeting to lysosomes for degradation. Ubiquitinated by ZNRF1; leading to degradation and modulation of the TLR4-mediated immune response.

It is found in the golgi apparatus membrane. The protein localises to the cell membrane. It localises to the membrane. The protein resides in the caveola. Its subcellular location is the membrane raft. May act as a scaffolding protein within caveolar membranes. Forms a stable heterooligomeric complex with CAV2 that targets to lipid rafts and drives caveolae formation. Mediates the recruitment of CAVIN proteins (CAVIN1/2/3/4) to the caveolae. Interacts directly with G-protein alpha subunits and can functionally regulate their activity. Involved in the costimulatory signal essential for T-cell receptor (TCR)-mediated T-cell activation. Its binding to DPP4 induces T-cell proliferation and NF-kappa-B activation in a T-cell receptor/CD3-dependent manner. Recruits CTNNB1 to caveolar membranes and may regulate CTNNB1-mediated signaling through the Wnt pathway. Negatively regulates TGFB1-mediated activation of SMAD2/3 by mediating the internalization of TGFBR1 from membrane rafts leading to its subsequent degradation. Binds 20(S)-hydroxycholesterol (20(S)-OHC). This Dasypus novemcinctus (Nine-banded armadillo) protein is Caveolin-1 (CAV1).